Here is a 937-residue protein sequence, read N- to C-terminus: Hexon protein (937 aa).

A2 is subject to N-acetylalanine; by host. Disordered stretches follow at residues 190-210 (PQVG…FGGR) and 224-251 (SFAR…VETE). A Phosphotyrosine; by host modification is found at Y925.

Belongs to the adenoviridae hexon protein family. Homotrimer. Interacts with the capsid vertex protein; this interaction binds the peripentonal hexons to the neighboring penton base. Interacts with the hexon-linking protein; this interaction tethers the hexons surrounding the penton to those situated in the central plate of the facet. Interacts with the hexon-interlacing protein; this interaction lashes the hexons together. Interacts with host dyneins DYNC1LI1 and DYNC1I2; this interaction might be involved in intracellular microtubule-dependent transport of incoming viral capsid. Interacts with the shutoff protein; this interaction allows folding and formation of hexons trimers. Interacts with pre-protein VI; this interaction probably allows nuclear import of hexon trimers and possibly pre-capsid assembly.

It is found in the virion. The protein localises to the host nucleus. Functionally, major capsid protein that self-associates to form 240 hexon trimers, each in the shape of a hexagon, building most of the pseudo T=25 capsid. Assembled into trimeric units with the help of the chaperone shutoff protein. Transported by pre-protein VI to the nucleus where it associates with other structural proteins to form an empty capsid. Might be involved, through its interaction with host dyneins, in the intracellular microtubule-dependent transport of incoming viral capsid to the nucleus. This Homo sapiens (Human) protein is Hexon protein.